The primary structure comprises 360 residues: Phospho-N-acetylmuramoyl-pentapeptide-transferase (360 aa).

The next 10 helical transmembrane spans lie at 21-41 (YITV…LWIG), 73-93 (TMGG…WANL), 94-114 (ANPY…IGFV), 132-152 (WKYF…YWLG), 168-188 (IMPQ…VGTG), 199-219 (GLAI…AWAT), 239-259 (VVVF…FNTY), 263-283 (VFMG…VAIL), 288-308 (FLLV…ILQV), and 338-358 (VIIR…VTLK).

This sequence belongs to the glycosyltransferase 4 family. MraY subfamily. Mg(2+) is required as a cofactor.

It localises to the cell inner membrane. The enzyme catalyses UDP-N-acetyl-alpha-D-muramoyl-L-alanyl-gamma-D-glutamyl-meso-2,6-diaminopimeloyl-D-alanyl-D-alanine + di-trans,octa-cis-undecaprenyl phosphate = di-trans,octa-cis-undecaprenyl diphospho-N-acetyl-alpha-D-muramoyl-L-alanyl-D-glutamyl-meso-2,6-diaminopimeloyl-D-alanyl-D-alanine + UMP. Its pathway is cell wall biogenesis; peptidoglycan biosynthesis. In terms of biological role, catalyzes the initial step of the lipid cycle reactions in the biosynthesis of the cell wall peptidoglycan: transfers peptidoglycan precursor phospho-MurNAc-pentapeptide from UDP-MurNAc-pentapeptide onto the lipid carrier undecaprenyl phosphate, yielding undecaprenyl-pyrophosphoryl-MurNAc-pentapeptide, known as lipid I. This Haemophilus influenzae (strain PittEE) protein is Phospho-N-acetylmuramoyl-pentapeptide-transferase.